The primary structure comprises 119 residues: MVKRSDKVGEEIHKIISELLIKGLKDPRIGFLTITGVKMTPDLRQATVYFTVHGSDEDKKNSEAGLNSAKGYIRKEIGQALKMRFVPEVLFKYDTSLDYGQHIESILKEIGATDDGEQS.

Belongs to the RbfA family. Monomer. Binds 30S ribosomal subunits, but not 50S ribosomal subunits or 70S ribosomes.

Its subcellular location is the cytoplasm. One of several proteins that assist in the late maturation steps of the functional core of the 30S ribosomal subunit. Associates with free 30S ribosomal subunits (but not with 30S subunits that are part of 70S ribosomes or polysomes). Required for efficient processing of 16S rRNA. May interact with the 5'-terminal helix region of 16S rRNA. The sequence is that of Ribosome-binding factor A from Geobacter sp. (strain M21).